We begin with the raw amino-acid sequence, 362 residues long: Phosphoserine aminotransferase (362 aa).

2 residues coordinate L-glutamate: S9 and R42. Residues 76-77 (GR), W102, T153, D174, and Q197 contribute to the pyridoxal 5'-phosphate site. Position 198 is an N6-(pyridoxal phosphate)lysine (K198). 239-240 (NT) lines the pyridoxal 5'-phosphate pocket.

The protein belongs to the class-V pyridoxal-phosphate-dependent aminotransferase family. SerC subfamily. As to quaternary structure, homodimer. Pyridoxal 5'-phosphate serves as cofactor.

It is found in the cytoplasm. It carries out the reaction O-phospho-L-serine + 2-oxoglutarate = 3-phosphooxypyruvate + L-glutamate. The catalysed reaction is 4-(phosphooxy)-L-threonine + 2-oxoglutarate = (R)-3-hydroxy-2-oxo-4-phosphooxybutanoate + L-glutamate. Its pathway is amino-acid biosynthesis; L-serine biosynthesis; L-serine from 3-phospho-D-glycerate: step 2/3. It participates in cofactor biosynthesis; pyridoxine 5'-phosphate biosynthesis; pyridoxine 5'-phosphate from D-erythrose 4-phosphate: step 3/5. Functionally, catalyzes the reversible conversion of 3-phosphohydroxypyruvate to phosphoserine and of 3-hydroxy-2-oxo-4-phosphonooxybutanoate to phosphohydroxythreonine. This is Phosphoserine aminotransferase from Escherichia coli O17:K52:H18 (strain UMN026 / ExPEC).